The sequence spans 246 residues: UPF0309 protein OB3413 (246 aa).

The 180-residue stretch at 33–212 (MATAVMNGNS…VLKMIEIFEE (180 aa)) folds into the SIS domain.

It belongs to the UPF0309 family.

In Oceanobacillus iheyensis (strain DSM 14371 / CIP 107618 / JCM 11309 / KCTC 3954 / HTE831), this protein is UPF0309 protein OB3413.